Here is a 1084-residue protein sequence, read N- to C-terminus: Teashirt homolog 1 (1084 aa).

Disordered stretches follow at residues 49–108 (EETE…SVSY), 140–167 (NSAT…TAST), and 269–298 (GHYR…MEME). 2 stretches are compositionally biased toward polar residues: residues 57–71 (QSYQ…TNQD) and 140–152 (NSAT…SQKE). 2 C2H2-type zinc fingers span residues 246-270 (FRCK…ETGH) and 307-331 (LKCM…KTKH). Residues 269–284 (GHYRDDNRDKDSEKTK) are compositionally biased toward basic and acidic residues. The C2H2-type 3; atypical zinc-finger motif lies at 416–440 (LKCMECGSSHDTLQQLTAHMMVTGH). Disordered regions lie at residues 467 to 534 (SIPL…EKFE) and 653 to 728 (TGKV…LKAK). Composition is skewed to basic and acidic residues over residues 496-534 (SEEK…EKFE), 653-671 (TGKV…EKSS), and 681-714 (KENK…ESTL). Residue serine 771 is modified to Phosphoserine. The tract at residues 855–879 (GRLTPKSSTPSTVSEKSDADGSSFE) is disordered. Residues 859-868 (PKSSTPSTVS) are compositionally biased toward polar residues. Residues 891 to 961 (RKGRQSNWNP…NVKYQLRRTG (71 aa)) constitute a DNA-binding region (homeobox; atypical). 2 consecutive C2H2-type zinc fingers follow at residues 976-998 (FFCN…LETH) and 1044-1067 (FQCK…SKTH).

It belongs to the teashirt C2H2-type zinc-finger protein family. Interacts (via homeobox domain) with APBB1 (via PID domain 1).

Its subcellular location is the nucleus. In terms of biological role, probable transcriptional regulator involved in developmental processes. May act as a transcriptional repressor (Potential). The chain is Teashirt homolog 1 (Tshz1) from Mus musculus (Mouse).